Reading from the N-terminus, the 266-residue chain is PTS system sorbose-specific EIIC component (266 aa).

Residues 1–237 (MEISTLQIIA…GGVGVIIALI (237 aa)) form the PTS EIIC type-4 domain. Helical transmembrane passes span 3-23 (ISTLQIIAIFIFSCIAGMGSV), 33-53 (LIACTVIGLILGDLKTGVMLG), 79-99 (IISAILVIVGHQSIAIGIAIA), 100-120 (LPVAAAGQVLTVFARTITVVF), 151-171 (VAIPALVVSLFVSADMVSSML), 183-203 (QIAGGFIVVVGYAMVLRMMGV), and 219-239 (YLDFSLLAFGGVGVIIALIYI).

The protein localises to the cell inner membrane. Its function is as follows. The phosphoenolpyruvate-dependent sugar phosphotransferase system (PTS), a major carbohydrate active transport system, catalyzes the phosphorylation of incoming sugar substrates concomitant with their translocation across the cell membrane. The enzyme II SorABFM PTS system is involved in L-sorbose transport. This Klebsiella pneumoniae protein is PTS system sorbose-specific EIIC component.